We begin with the raw amino-acid sequence, 760 residues long: MAFVAGVIRRLDETVVNRIAAGEVIQRPANAIKEMIENCLDAKSTNIQVVVKEGGLKLIQIQDNGTGIRKEDLDIVCERFTTSKLQTFEDLASISTYGFRGEALASISHVAHVTITTKTADGKCAYRASYSDGKLQAPPKPCAGNQGTLITVEDLFYNIITRRKALKNPSEEYGKILEVVGRYSIHNSGISFSVKKQGETVSDVRTLPNATTVDNIRSIFGNAVSRELIEVGCEDKTLAFKMNGYISNANYSVKKCIFLLFINHRLVESAALRKAIETVYAAYLPKNTHPFLYLSLEISPQNVDVNVHPTKHEVHFLHEESILQRVQQHIESKLLGSNSSRMYFTQTLLPGLAGPSGEAARPTTGVASSSTSGSGDKVYAYQMVRTDSREQKLDAFLQPVSSLGPSQPQDPAPVRGARTEGSPERATREDEEMLALPAPAEAAAESENLERESLMETSDAAQKAAPTSSPGSSRKRHREDSDVEMVENASGKEMTAACYPRRRIINLTSVLSLQEEISERCHETLREMLRNHSFVGCVNPQWALAQHQTKLYLLNTTKLSEELFYQILIYDFANFGVLRLSEPAPLFDLAMLALDSPESGWTEDDGPKEGLAEYIVEFLKKKAEMLADYFSVEIDEEGNLIGLPLLIDSYVPPLEGLPIFILRLATEVNWDEEKECFESLSKECAMFYSIRKQYILEESTLSGQQSDMPGSTSKPWKWTVEHIIYKAFRSHLLPPKHFTEDGNVLQLANLPDLYKVFERC.

N6-acetyllysine is present on Lys-33. ATP is bound by residues Asn-38, Asp-63, Thr-82–Lys-84, and Arg-100–Leu-104. The residue at position 241 (Lys-241) is an N6-acetyllysine. The segment at Gly-354 to Gly-375 is disordered. Over residues Thr-363–Gly-375 the composition is skewed to low complexity. Lys-377 is subject to N6-acetyllysine. Positions Val-400–Gln-409 are enriched in polar residues. The disordered stretch occupies residues Val-400–Asn-488. The tract at residues Ala-412 to Leu-654 is interaction with EXO1. The span at Ala-417 to Arg-428 shows a compositional bias: basic and acidic residues. Residues Leu-434–Ser-446 show a composition bias toward low complexity. Residues Met-455 to Ser-472 are compositionally biased toward polar residues. Residues Lys-475 to Arg-478 carry the Nuclear localization signal motif. Phosphoserine is present on Ser-481.

Belongs to the DNA mismatch repair MutL/HexB family. In terms of assembly, component of the DNA mismatch repair (MMR) complex composed at least of MSH2, MSH3, MSH6, PMS1 and MLH1. Heterodimer of MLH1 and PMS2 (MutL alpha), MLH1 and PMS1 (MutL beta) or MLH1 and MLH3 (MutL gamma). Forms a ternary complex with MutS alpha (MSH2-MSH6) or MutS beta (MSH2-MSH3). Part of the BRCA1-associated genome surveillance complex (BASC), which contains BRCA1, MSH2, MSH6, MLH1, ATM, BLM, PMS2 and the RAD50-MRE11-NBS1 protein complex. This association could be a dynamic process changing throughout the cell cycle and within subnuclear domains. Interacts with MCM9; the interaction recruits MLH1 to chromatin. Interacts with MCM8. Interacts with PMS2. Interacts with MBD4. Interacts with EXO1. Interacts with MTMR15/FAN1. Acetylated. Deacetylated by HDAC6 which prevents the MutL alpha complex, formed by the MLH1-PMS2 heterodimer, from being recruited to the MutS alpha complex, formed by the MSH2-MSH6 heterodimer, leading to tolerance of DNA damage.

It is found in the nucleus. The protein resides in the chromosome. In terms of biological role, heterodimerizes with Pms2 to form MutL alpha, a component of the post-replicative DNA mismatch repair system (MMR). DNA repair is initiated by MutS alpha (Msh2-Msh6) or MutS beta (MSH2-MSH3) binding to a dsDNA mismatch, then MutL alpha is recruited to the heteroduplex. Assembly of the MutL-MutS-heteroduplex ternary complex in presence of RFC and PCNA is sufficient to activate endonuclease activity of Pms2. It introduces single-strand breaks near the mismatch and thus generates new entry points for the exonuclease EXO1 to degrade the strand containing the mismatch. DNA methylation would prevent cleavage and therefore assure that only the newly mutated DNA strand is going to be corrected. MutL alpha (Mlh1-Pms2) interacts physically with the clamp loader subunits of DNA polymerase III, suggesting that it may play a role to recruit the DNA polymerase III to the site of the MMR. Also implicated in DNA damage signaling, a process which induces cell cycle arrest and can lead to apoptosis in case of major DNA damages. Heterodimerizes with Mlh3 to form MutL gamma which plays a role in meiosis. This Mus musculus (Mouse) protein is DNA mismatch repair protein Mlh1 (Mlh1).